The following is a 138-amino-acid chain: Extracellular glycoprotein lacritin (138 aa).

An N-terminal signal peptide occupies residues 1–19 (MKFTTLLFLAAVAGALVYA). The disordered stretch occupies residues 20–79 (EDASSDSTGADPAQEAGTSKPNEEISGPAEPASPPETTTTAQETSAAAVQGTAKVTSSRQ). Residues 43–67 (EISGPAEPASPPETTTTAQETSAAA) are compositionally biased toward low complexity. A glycan (N-linked (GlcNAc...) asparagine) is linked at Asn119.

Expressed in secretory granules of many acinar cells in lacrimal gland and in scattered acinar cells of salivary glands.

The protein localises to the secreted. In terms of biological role, modulates secretion by lacrimal acinar cells. The sequence is that of Extracellular glycoprotein lacritin (LACRT) from Homo sapiens (Human).